The sequence spans 515 residues: Rop guanine nucleotide exchange factor 12 (515 aa).

Residues 83–446 (QARERQLLAD…RAGNKRNTPL (364 aa)) form the PRONE domain. Residue Ser510 is modified to Phosphoserine.

As to quaternary structure, interacts (via C-terminus) with PRK2. Interacts with PRK6. In terms of tissue distribution, expressed in pollen grains.

The protein resides in the cytoplasm. It localises to the cell membrane. Its activity is regulated as follows. Phosphorylation at Ser-510 by PRK2 may release ROPGEF12 auto-inhibition, thereby activating ROPGEF12 and downstream Rop signaling. Guanine-nucleotide exchange factor (GEF) that acts as an activator of Rop (Rho of plants) GTPases by promoting the exchange of GDP for GTP. May be recruited by PRK2 at the plasma membrane to maintain polar Rop activity in the pollen tube and control polarized pollen tube growth. This Arabidopsis thaliana (Mouse-ear cress) protein is Rop guanine nucleotide exchange factor 12.